The sequence spans 346 residues: NADH-ubiquinone oxidoreductase chain 2 (346 aa).

11 helical membrane-spanning segments follow: residues 1–21 (MSPY…MLIS), 26–46 (WVFM…ILVW), 60–80 (FIVQ…SLSG), 96–116 (MMIM…YWVV), 122–142 (LNYI…LAVL), 151–171 (SSML…GGLG), 178–198 (LLAF…VAGS), 199–219 (LLGL…FSIL), 242–262 (VLLG…GFFG), 274–294 (LLLG…FYYL), and 320–340 (LSGL…LVGG).

This sequence belongs to the complex I subunit 2 family.

The protein localises to the mitochondrion inner membrane. It carries out the reaction a ubiquinone + NADH + 5 H(+)(in) = a ubiquinol + NAD(+) + 4 H(+)(out). In terms of biological role, core subunit of the mitochondrial membrane respiratory chain NADH dehydrogenase (Complex I) that is believed to belong to the minimal assembly required for catalysis. Complex I functions in the transfer of electrons from NADH to the respiratory chain. The immediate electron acceptor for the enzyme is believed to be ubiquinone. This Branchiostoma floridae (Florida lancelet) protein is NADH-ubiquinone oxidoreductase chain 2 (ND2).